The chain runs to 135 residues: Class I hydrophobin 2 (135 aa).

An N-terminal signal peptide occupies residues 1–20; that stretch reads MFARLTSTLFALAAVSAVFA. Intrachain disulfides connect Cys-29/Cys-114, Cys-36/Cys-107, Cys-37/Cys-73, and Cys-115/Cys-128. Asn-117 and Asn-132 each carry an N-linked (GlcNAc...) asparagine glycan.

Belongs to the fungal hydrophobin family. In terms of assembly, self-assembles to form functional amyloid fibrils called rodlets. Self-assembly into fibrillar rodlets occurs spontaneously at hydrophobic:hydrophilic interfaces and the rodlets further associate laterally to form amphipathic monolayers.

It is found in the secreted. The protein resides in the cell wall. Functionally, aerial growth, conidiation, and dispersal of filamentous fungi in the environment rely upon a capability of their secreting small amphipathic proteins called hydrophobins (HPBs) with low sequence identity. Class I can self-assemble into an outermost layer of rodlet bundles on aerial cell surfaces, conferring cellular hydrophobicity that supports fungal growth, development and dispersal; whereas Class II form highly ordered films at water-air interfaces through intermolecular interactions but contribute nothing to the rodlet structure. In Coprinopsis cinerea (strain Okayama-7 / 130 / ATCC MYA-4618 / FGSC 9003) (Inky cap fungus), this protein is Class I hydrophobin 2.